The following is a 201-amino-acid chain: Superoxide dismutase [Mn] (201 aa).

4 residues coordinate Mn(2+): His-27, His-81, Asp-163, and His-167.

It belongs to the iron/manganese superoxide dismutase family. Homodimer. The cofactor is Mn(2+).

The protein localises to the secreted. The catalysed reaction is 2 superoxide + 2 H(+) = H2O2 + O2. Its function is as follows. Destroys superoxide anion radicals which are normally produced within the cells and which are toxic to biological systems. The chain is Superoxide dismutase [Mn] (sodA) from Streptococcus pyogenes serotype M18 (strain MGAS8232).